The following is a 613-amino-acid chain: Oxidoreductase GME11365 (613 aa).

3 consecutive Plastocyanin-like domains span residues 72–188 (ISEA…HGPS), 198–331 (PLLI…WIHG), and 431–571 (VDWR…EQPS).

Belongs to the multicopper oxidase family.

Its pathway is secondary metabolite biosynthesis. Oxidoreductase; part of the gene cluster that mediates the biosynthesis of dibenzodioxocinones such as pestalotiollide B, a novel class of inhibitors against cholesterol ester transfer protein (CEPT). The biosynthesis initiates from condensation of acetate and malonate units catalyzed by the non-reducing PKS pks8/GME11356. Pks8/GME11356 lacks a thioesterase (TE) domain, which is important to the cyclizing of the third ring of atrochrysone carboxylic acid, and the esterase GME11355 might play the role of TE and catalyzes the cyclization reaction of the C ring. The lactamase-like protein GME11357 (or other beta-lactamases in Pestalotiopsis microspora) probably hydrolyzes the thioester bond between the ACP of pks8/GME11356 and the intermediate to release atrochrysone carboxylic acid, which is spontaneously dehydrates to form endocrocin anthrone. Endocrocin anthrone is further converted to emodin via the endocrocin intermediate. Emodin is then oxidized by several enzymes such as the Baeyer-Villiger oxidase GME11358, the oxidoreductase GME11367, the short chain dehydrogenase/reductase GME11373, as well as by other oxidoreductases from the cluster, to modify the A and C rings and open the B ring, and finally yield monodictyphenone. The prenyltransferase GME11375 may catalyze the addition reaction between the C5 side chains and the carbon bone of dibenzodioxocinones. The remaining biochemical reactions to the final product dibenzodioxocinones should be methylation catalyzed by methyltransferase GME11366 and reduction and lactonization reaction catalyzed by a series of oxidordeuctases. In Pestalotiopsis microspora, this protein is Oxidoreductase GME11365.